Reading from the N-terminus, the 192-residue chain is UPF0149 protein Spro_3920 (192 aa).

This sequence belongs to the UPF0149 family.

The sequence is that of UPF0149 protein Spro_3920 from Serratia proteamaculans (strain 568).